A 308-amino-acid chain; its full sequence is Elongation factor Ts (308 aa).

An involved in Mg(2+) ion dislocation from EF-Tu region spans residues 79–82 (TDFV).

This sequence belongs to the EF-Ts family.

The protein localises to the cytoplasm. In terms of biological role, associates with the EF-Tu.GDP complex and induces the exchange of GDP to GTP. It remains bound to the aminoacyl-tRNA.EF-Tu.GTP complex up to the GTP hydrolysis stage on the ribosome. This chain is Elongation factor Ts, found in Bdellovibrio bacteriovorus (strain ATCC 15356 / DSM 50701 / NCIMB 9529 / HD100).